A 475-amino-acid polypeptide reads, in one-letter code: Pyruvate kinase (475 aa).

Arg36 provides a ligand contact to substrate. Residues Asn38, Ser40, and Asp70 each coordinate K(+). Residue 38 to 41 (NFSH) coordinates ATP. Residues Arg77 and Lys158 each coordinate ATP. Residue Glu223 coordinates Mg(2+). Substrate contacts are provided by Gly246, Asp247, and Thr279. Position 247 (Asp247) interacts with Mg(2+).

It belongs to the pyruvate kinase family. As to quaternary structure, homotetramer. Requires a divalent metal cation as cofactor.

It carries out the reaction pyruvate + ATP = phosphoenolpyruvate + ADP + H(+). It participates in carbohydrate degradation; glycolysis; pyruvate from D-glyceraldehyde 3-phosphate: step 5/5. This Thermococcus litoralis (strain ATCC 51850 / DSM 5473 / JCM 8560 / NS-C) protein is Pyruvate kinase (pki).